Reading from the N-terminus, the 101-residue chain is Pro-corazonin (101 aa).

The signal sequence occupies residues 1–16; sequence MLVLFVLSLVVSCALC. Position 27 is an asparagine amide (N27). Residues 31-101 constitute a propeptide that is removed on maturation; the sequence is SNFPAEISAL…REKAPNNDNY (71 aa).

The protein belongs to the corazonin family. In terms of tissue distribution, expressed in central brain and the retrocerebral complex but not in antennal lobes, optic lobes or in gnathal, thoracic and abdominal ganglia (at protein level).

It localises to the secreted. In terms of biological role, cardioactive peptide. Corazonin is probably involved in the physiological regulation of the heart beat. The sequence is that of Pro-corazonin from Camponotus floridanus (Florida carpenter ant).